Consider the following 157-residue polypeptide: Arginine regulator (157 aa).

Belongs to the ArgR family.

The protein resides in the cytoplasm. It participates in amino-acid degradation; L-arginine degradation via ADI pathway. Functionally, regulates the transcription of the arc operon, involved in arginine catabolism. This is Arginine regulator (argR1) from Streptococcus pyogenes serotype M3 (strain ATCC BAA-595 / MGAS315).